We begin with the raw amino-acid sequence, 304 residues long: Oxygen-dependent coproporphyrinogen-III oxidase (304 aa).

Substrate is bound at residue S94. H98 and H108 together coordinate a divalent metal cation. H108 functions as the Proton donor in the catalytic mechanism. 110 to 112 (NVR) is a binding site for substrate. Residues H147 and H177 each coordinate a divalent metal cation. Residues 242-277 (YVEFNLVYDRGTLFGLQTGGRTESILMSMPPLVRWQ) are important for dimerization. 260 to 262 (GGR) serves as a coordination point for substrate.

It belongs to the aerobic coproporphyrinogen-III oxidase family. Homodimer. A divalent metal cation is required as a cofactor.

It localises to the cytoplasm. The catalysed reaction is coproporphyrinogen III + O2 + 2 H(+) = protoporphyrinogen IX + 2 CO2 + 2 H2O. The protein operates within porphyrin-containing compound metabolism; protoporphyrin-IX biosynthesis; protoporphyrinogen-IX from coproporphyrinogen-III (O2 route): step 1/1. Its function is as follows. Involved in the heme biosynthesis. Catalyzes the aerobic oxidative decarboxylation of propionate groups of rings A and B of coproporphyrinogen-III to yield the vinyl groups in protoporphyrinogen-IX. The chain is Oxygen-dependent coproporphyrinogen-III oxidase from Shewanella amazonensis (strain ATCC BAA-1098 / SB2B).